A 424-amino-acid polypeptide reads, in one-letter code: Dihydroorotase (424 aa).

Zn(2+)-binding residues include His-58 and His-60. Residues His-60–Arg-62 and Asn-92 each bind substrate. Zn(2+) contacts are provided by Asp-150, His-177, and His-230. A substrate-binding site is contributed by Asn-276. Asp-303 serves as a coordination point for Zn(2+). Asp-303 is a catalytic residue. Residues His-307 and Phe-321–Gly-322 contribute to the substrate site.

This sequence belongs to the metallo-dependent hydrolases superfamily. DHOase family. Class I DHOase subfamily. Zn(2+) serves as cofactor.

It carries out the reaction (S)-dihydroorotate + H2O = N-carbamoyl-L-aspartate + H(+). The protein operates within pyrimidine metabolism; UMP biosynthesis via de novo pathway; (S)-dihydroorotate from bicarbonate: step 3/3. In terms of biological role, catalyzes the reversible cyclization of carbamoyl aspartate to dihydroorotate. The sequence is that of Dihydroorotase from Staphylococcus aureus (strain MRSA252).